We begin with the raw amino-acid sequence, 673 residues long: DNA ligase (673 aa).

NAD(+) contacts are provided by residues 32–36 (DHVYD), 81–82 (SL), and glutamate 111. The active-site N6-AMP-lysine intermediate is the lysine 113. The NAD(+) site is built by arginine 134, glutamate 171, lysine 286, and lysine 310. The Zn(2+) site is built by cysteine 404, cysteine 407, cysteine 422, and cysteine 428. The region spanning 595 to 673 (NIIDEYKNKT…NEFWKKDNNF (79 aa)) is the BRCT domain.

It belongs to the NAD-dependent DNA ligase family. LigA subfamily. Mg(2+) serves as cofactor. Requires Mn(2+) as cofactor.

The catalysed reaction is NAD(+) + (deoxyribonucleotide)n-3'-hydroxyl + 5'-phospho-(deoxyribonucleotide)m = (deoxyribonucleotide)n+m + AMP + beta-nicotinamide D-nucleotide.. In terms of biological role, DNA ligase that catalyzes the formation of phosphodiester linkages between 5'-phosphoryl and 3'-hydroxyl groups in double-stranded DNA using NAD as a coenzyme and as the energy source for the reaction. It is essential for DNA replication and repair of damaged DNA. This Ureaplasma parvum serovar 3 (strain ATCC 27815 / 27 / NCTC 11736) protein is DNA ligase.